A 280-amino-acid chain; its full sequence is MKYIGAHVSAAGGVDRAVERASELEATAFALFTKNQRQWHAAPLTDEVISAFRLACEKHRYTPAQILPHDSYLINLGHPVAEALEKSRDAFLDEMNRCQQLGLTLLNFHPGSHLQQITEDECLKRIAESINIVLNNTAGVTAVIENTAGQGSNLGFRFEHLAAIIDGVEDKSRVGVCIDTCHAFAGGYDLRSEEACVNTFAEFERIVGFQYLRGMHLNDAKSEFNSRVDRHHSLGEGNIGKAAFSWLMKDKRFDGIPMILETIDPEIWKDEIAWLKSEQK.

Positions 69, 109, 145, 179, 182, 216, 229, 231, and 261 each coordinate Zn(2+).

Belongs to the AP endonuclease 2 family. Requires Zn(2+) as cofactor.

The catalysed reaction is Endonucleolytic cleavage to 5'-phosphooligonucleotide end-products.. In terms of biological role, endonuclease IV plays a role in DNA repair. It cleaves phosphodiester bonds at apurinic or apyrimidinic (AP) sites, generating a 3'-hydroxyl group and a 5'-terminal sugar phosphate. This is Probable endonuclease 4 from Erwinia tasmaniensis (strain DSM 17950 / CFBP 7177 / CIP 109463 / NCPPB 4357 / Et1/99).